A 447-amino-acid chain; its full sequence is Innexin-5 (447 aa).

Transmembrane regions (helical) follow at residues 30–47 (TSTLLGFSAIMMAASQYV), 108–128 (QWIPIVLVLQAFLFYLPSIIW), 198–218 (ALYLLVKILYLANIVLQFWIL), and 283–303 (VYVFFWFWLLFVGLLTVCSLA). The tract at residues 389–447 (KKDDDSALPASAPVDLQEDDDDDTPFPPPTKAVAETLTSDDEEEETDVDSPDTTATLPR) is disordered. A compositionally biased stretch (acidic residues) spans 426-438 (TSDDEEEETDVDS).

It belongs to the pannexin family.

The protein localises to the cell membrane. It localises to the cell junction. It is found in the gap junction. Its function is as follows. Structural component of the gap junctions. This Caenorhabditis elegans protein is Innexin-5 (inx-5).